Reading from the N-terminus, the 276-residue chain is MKVTIDVTGKKKDERQDNEKQSVIYPVVKNEKEASVSEGKPAAVIDSILLLSTILVAWILHPISKKIFGNFLLHIVGWGNLGYLVFSTISNLFSRSLESEDDSVLEAEDIEDIVAIITLLLHLFTFVFLVVNRFVVNGTINKLSNAIVCNPLGIYFASSNFLEAQKALKFQKPYHISYIILKATFIIGAAVSFDYDKDINRGILMRFFLLFFLGIILFIVEDYVISMFKISKEKITSFRVFMNIILVVAYTVAGYYMMNRIFLQESVCSNSSNKVV.

To E.cuniculi ECU05_1600/ECU11_0130.

This is an uncharacterized protein from Encephalitozoon cuniculi (strain GB-M1) (Microsporidian parasite).